A 115-amino-acid chain; its full sequence is NADH-ubiquinone oxidoreductase chain 3 (115 aa).

3 consecutive transmembrane segments (helical) span residues 4 to 24 (FIVMMINIILSMSLIIIAFWL), 55 to 75 (FFLVAITFLLFDLEIALLLPL), and 86 to 106 (ITMLTAFILVTVLALGLAYEW).

The protein belongs to the complex I subunit 3 family. In terms of assembly, core subunit of respiratory chain NADH dehydrogenase (Complex I) which is composed of 45 different subunits. Interacts with TMEM186. Interacts with TMEM242.

It localises to the mitochondrion inner membrane. The enzyme catalyses a ubiquinone + NADH + 5 H(+)(in) = a ubiquinol + NAD(+) + 4 H(+)(out). Core subunit of the mitochondrial membrane respiratory chain NADH dehydrogenase (Complex I) which catalyzes electron transfer from NADH through the respiratory chain, using ubiquinone as an electron acceptor. Essential for the catalytic activity of complex I. This chain is NADH-ubiquinone oxidoreductase chain 3, found in Reithrodontomys fulvescens (Fulvous harvest mouse).